We begin with the raw amino-acid sequence, 341 residues long: S-adenosylmethionine:tRNA ribosyltransferase-isomerase (341 aa).

It belongs to the QueA family. Monomer.

The protein localises to the cytoplasm. It catalyses the reaction 7-aminomethyl-7-carbaguanosine(34) in tRNA + S-adenosyl-L-methionine = epoxyqueuosine(34) in tRNA + adenine + L-methionine + 2 H(+). The protein operates within tRNA modification; tRNA-queuosine biosynthesis. In terms of biological role, transfers and isomerizes the ribose moiety from AdoMet to the 7-aminomethyl group of 7-deazaguanine (preQ1-tRNA) to give epoxyqueuosine (oQ-tRNA). The polypeptide is S-adenosylmethionine:tRNA ribosyltransferase-isomerase (Clostridium perfringens (strain SM101 / Type A)).